Consider the following 480-residue polypeptide: MSPQTETKAGVGFKAGVKDYKLTYYTPEYETKDTDILAAFRVTPQPGVPPEEAGAAVAAESSTGTWTTVWTDGLTSLDRYKGRCYHIEPVVGEQNQYIAYVAYPLDLFEEGSVTNMFTSIVGNVFGFKALRALRLEDLRIPPAYSKTFQGPPHGIQVERDKLNKYGRPLLGCTIKPKLGLSAKNYGRAVYECLRGGLDFTKDDENVNSQPFMRWRDRFLFCAEAIYKAQAETGEIKGHYLNATAGTCEEMMRRAQCARELGVPIVMHDYLTGGFTANTSLAIYCRNNGLLLHIHRAMHAVIDRQKNHGMHFRVLAKALRMSGGDHIHAGTVVGKLEGEREMTLGFVDLLRDDYIEKDRSRGIFFTQDWVSMPGVLPVASGGIHVWHMPALTEIFGDDSVLQFGGGTLGHPWGNAPGAVANRVALEACVQARNEGRDLARESTQIIREACKWSPELAAACEVWKEIKFEFEPVDKLDVKKN.

A propeptide spanning residues 1 to 2 (MS) is cleaved from the precursor. At Pro3 the chain carries N-acetylproline. Lys14 is modified (N6,N6,N6-trimethyllysine). Asn123 and Thr173 together coordinate substrate. Lys175 functions as the Proton acceptor in the catalytic mechanism. Lys177 contacts substrate. Mg(2+) is bound by residues Lys201, Asp203, and Glu204. N6-carboxylysine is present on Lys201. His294 acts as the Proton acceptor in catalysis. The substrate site is built by Arg295, His327, and Ser379.

The protein belongs to the RuBisCO large chain family. Type I subfamily. Heterohexadecamer of 8 large chains and 8 small chains; disulfide-linked. The disulfide link is formed within the large subunit homodimers. The cofactor is Mg(2+). The disulfide bond which can form in the large chain dimeric partners within the hexadecamer appears to be associated with oxidative stress and protein turnover.

The protein localises to the plastid. The protein resides in the chloroplast. It carries out the reaction 2 (2R)-3-phosphoglycerate + 2 H(+) = D-ribulose 1,5-bisphosphate + CO2 + H2O. The enzyme catalyses D-ribulose 1,5-bisphosphate + O2 = 2-phosphoglycolate + (2R)-3-phosphoglycerate + 2 H(+). Its function is as follows. RuBisCO catalyzes two reactions: the carboxylation of D-ribulose 1,5-bisphosphate, the primary event in carbon dioxide fixation, as well as the oxidative fragmentation of the pentose substrate in the photorespiration process. Both reactions occur simultaneously and in competition at the same active site. The polypeptide is Ribulose bisphosphate carboxylase large chain (Acorus calamus var. americanus (American sweet flag)).